Reading from the N-terminus, the 509-residue chain is Cytochrome P450 4A10 (509 aa).

The next 2 helical transmembrane spans lie at phenylalanine 11 to leucine 31 and leucine 121 to histidine 141. Glutamate 320 is a binding site for heme. Serine 439 carries the post-translational modification Phosphoserine. Cysteine 456 is a heme binding site.

This sequence belongs to the cytochrome P450 family. The cofactor is heme. As to expression, expressed in liver (at protein level) and kidney (at protein level).

Its subcellular location is the endoplasmic reticulum membrane. The protein localises to the microsome membrane. It carries out the reaction an omega-methyl-long-chain fatty acid + reduced [NADPH--hemoprotein reductase] + O2 = an omega-hydroxy-long-chain fatty acid + oxidized [NADPH--hemoprotein reductase] + H2O + H(+). The enzyme catalyses dodecanoate + reduced [NADPH--hemoprotein reductase] + O2 = 12-hydroxydodecanoate + oxidized [NADPH--hemoprotein reductase] + H2O + H(+). The catalysed reaction is dodecanoate + reduced [NADPH--hemoprotein reductase] + O2 = 11-hydroxydodecanoate + oxidized [NADPH--hemoprotein reductase] + H2O + H(+). It catalyses the reaction tetradecanoate + reduced [NADPH--hemoprotein reductase] + O2 = 14-hydroxytetradecanoate + oxidized [NADPH--hemoprotein reductase] + H2O + H(+). It carries out the reaction hexadecanoate + reduced [NADPH--hemoprotein reductase] + O2 = 16-hydroxyhexadecanoate + oxidized [NADPH--hemoprotein reductase] + H2O + H(+). The enzyme catalyses (9Z)-octadecenoate + reduced [NADPH--hemoprotein reductase] + O2 = 18-hydroxy-(9Z)-octadecenoate + oxidized [NADPH--hemoprotein reductase] + H2O + H(+). The catalysed reaction is (9Z,12Z)-octadecadienoate + reduced [NADPH--hemoprotein reductase] + O2 = 18-hydroxy-(9Z,12Z)-octadecadienoate + oxidized [NADPH--hemoprotein reductase] + H2O + H(+). It catalyses the reaction (9Z,12Z)-octadecadienoate + reduced [NADPH--hemoprotein reductase] + O2 = 17-hydroxy-(9Z,12Z)-octadecadienoate + oxidized [NADPH--hemoprotein reductase] + H2O + H(+). It carries out the reaction (5Z,8Z,11Z,14Z)-eicosatetraenoate + reduced [NADPH--hemoprotein reductase] + O2 = 20-hydroxy-(5Z,8Z,11Z,14Z)-eicosatetraenoate + oxidized [NADPH--hemoprotein reductase] + H2O + H(+). The enzyme catalyses 8,9-epoxy-(5Z,11Z,14Z)-eicosatrienoate + reduced [NADPH--hemoprotein reductase] + O2 = 20-hydroxy-8,9-epoxy-(5Z,11Z,14Z)-eicosatrienoate + oxidized [NADPH--hemoprotein reductase] + H2O + H(+). In terms of biological role, a cytochrome P450 monooxygenase involved in the metabolism of fatty acids. Catalyzes predominantly the oxidation of the terminal carbon (omega-oxidation) of long-chain fatty acids. Acts as a major omega-hydroxylase for dodecanoic (lauric) acid in liver. In kidney, may play an important role in omega-hydroxylation of (5Z,8Z,11Z,14Z)-eicosatetraenoic acid (arachidonate) to 20-hydroxyeicosatetraenoic acid (20-HETE), a signaling molecule acting both as vasoconstrictive and natriuretic with overall effect on arterial blood pressure. Also participates in the formation of anti-inflammatory hydroxyepoxyeicosatrienoic acids (HEETs) in kidney by converting 8,9-epoxyeicosatrienoic acid (EET) to 20,8,9-HEET, an activator of PPARA. Displays substantially lower fatty acid omega-1 hydroxylase activity. Mechanistically, uses molecular oxygen inserting one oxygen atom into a substrate, and reducing the second into a water molecule, with two electrons provided by NADPH via cytochrome P450 reductase (CPR; NADPH-ferrihemoprotein reductase). The sequence is that of Cytochrome P450 4A10 (Cyp4a10) from Rattus norvegicus (Rat).